The primary structure comprises 365 residues: Phospho-N-acetylmuramoyl-pentapeptide-transferase (365 aa).

10 helical membrane-spanning segments follow: residues 15–35 (PSGTQLLGLLSVLLVGLAVLI), 51–71 (VPVLVSAIVAGIFGMWIVPLL), 96–116 (TMGGLIFLPVGLAAGVIFAGF), 121–141 (IAVALVTLAYGVIGWVDDWQV), 156–176 (LILQIAIAVVFCIWLALTAPE), 180–200 (ITFFAGLSLPLGVFFWALAGF), 217–237 (GLAGGTGAIAFLGVGALALPA), 238–258 (HPGLSLLCACLSGACLGFIYH), 279–299 (LAAAGILSGNIWGLLIISGIF), and 344–364 (TQIVGAFYLINLGLVLLSFIL).

This sequence belongs to the glycosyltransferase 4 family. MraY subfamily. Requires Mg(2+) as cofactor.

The protein localises to the cell inner membrane. The catalysed reaction is UDP-N-acetyl-alpha-D-muramoyl-L-alanyl-gamma-D-glutamyl-meso-2,6-diaminopimeloyl-D-alanyl-D-alanine + di-trans,octa-cis-undecaprenyl phosphate = di-trans,octa-cis-undecaprenyl diphospho-N-acetyl-alpha-D-muramoyl-L-alanyl-D-glutamyl-meso-2,6-diaminopimeloyl-D-alanyl-D-alanine + UMP. It participates in cell wall biogenesis; peptidoglycan biosynthesis. Catalyzes the initial step of the lipid cycle reactions in the biosynthesis of the cell wall peptidoglycan: transfers peptidoglycan precursor phospho-MurNAc-pentapeptide from UDP-MurNAc-pentapeptide onto the lipid carrier undecaprenyl phosphate, yielding undecaprenyl-pyrophosphoryl-MurNAc-pentapeptide, known as lipid I. This is Phospho-N-acetylmuramoyl-pentapeptide-transferase from Picosynechococcus sp. (strain ATCC 27264 / PCC 7002 / PR-6) (Agmenellum quadruplicatum).